The primary structure comprises 135 residues: Ribosome-binding factor A (135 aa).

This sequence belongs to the RbfA family. Monomer. Binds 30S ribosomal subunits, but not 50S ribosomal subunits or 70S ribosomes.

The protein resides in the cytoplasm. Its function is as follows. One of several proteins that assist in the late maturation steps of the functional core of the 30S ribosomal subunit. Associates with free 30S ribosomal subunits (but not with 30S subunits that are part of 70S ribosomes or polysomes). Required for efficient processing of 16S rRNA. May interact with the 5'-terminal helix region of 16S rRNA. This is Ribosome-binding factor A from Aliivibrio fischeri (strain ATCC 700601 / ES114) (Vibrio fischeri).